We begin with the raw amino-acid sequence, 876 residues long: Alanine--tRNA ligase (876 aa).

4 residues coordinate Zn(2+): His-565, His-569, Cys-667, and His-671.

The protein belongs to the class-II aminoacyl-tRNA synthetase family. The cofactor is Zn(2+).

Its subcellular location is the cytoplasm. It carries out the reaction tRNA(Ala) + L-alanine + ATP = L-alanyl-tRNA(Ala) + AMP + diphosphate. Its function is as follows. Catalyzes the attachment of alanine to tRNA(Ala) in a two-step reaction: alanine is first activated by ATP to form Ala-AMP and then transferred to the acceptor end of tRNA(Ala). Also edits incorrectly charged Ser-tRNA(Ala) and Gly-tRNA(Ala) via its editing domain. In Desulfosudis oleivorans (strain DSM 6200 / JCM 39069 / Hxd3) (Desulfococcus oleovorans), this protein is Alanine--tRNA ligase.